Here is a 955-residue protein sequence, read N- to C-terminus: Coiled-coil domain-containing protein 146 (955 aa).

The span at 1 to 17 (MEDSSTDTEKEEEEEKD) shows a compositional bias: acidic residues. Residues 1–22 (MEDSSTDTEKEEEEEKDEKDQE) are disordered. Coiled coils occupy residues 114–141 (EAFS…KERE), 169–321 (GEME…AREN), 400–461 (STLS…LLRM), 534–640 (KAHQ…RNES), and 667–832 (NGEI…MKQA).

As to quaternary structure, interacts with CCDC38 and CCDC42. Interacts with intraflagellar transport proteins IFT20 and IFT88. (Microbial infection) Interacts with Chlamydia trachomatis incM/YT288. In host cells infected with C.trachomatis incM, CCDC146 is recruited to the periphery of the pathogen-containing vacuole but recruitment is not dependent on incM. In terms of tissue distribution, widely expressed.

It is found in the cytoplasm. The protein resides in the cytoskeleton. The protein localises to the microtubule organizing center. It localises to the centrosome. Its subcellular location is the centriole. It is found in the flagellum axoneme. The protein resides in the cilium basal body. The protein localises to the midbody. Its function is as follows. Essential for sperm flagellum biogenesis and male fertility. This is Coiled-coil domain-containing protein 146 (CCDC146) from Homo sapiens (Human).